A 181-amino-acid chain; its full sequence is Probable pyruvoyl-dependent arginine decarboxylase (181 aa).

At Ser43 the chain carries Pyruvic acid (Ser).

Belongs to the PdaD family. The cofactor is pyruvate.

It catalyses the reaction L-arginine + H(+) = agmatine + CO2. This is Probable pyruvoyl-dependent arginine decarboxylase from Prosthecochloris aestuarii (strain DSM 271 / SK 413).